A 227-amino-acid chain; its full sequence is 7-cyano-7-deazaguanine synthase (227 aa).

10–20 (LSGGLDSCVAT) provides a ligand contact to ATP. C193, C201, C204, and C207 together coordinate Zn(2+).

The protein belongs to the QueC family. Zn(2+) is required as a cofactor.

The enzyme catalyses 7-carboxy-7-deazaguanine + NH4(+) + ATP = 7-cyano-7-deazaguanine + ADP + phosphate + H2O + H(+). The protein operates within purine metabolism; 7-cyano-7-deazaguanine biosynthesis. In terms of biological role, catalyzes the ATP-dependent conversion of 7-carboxy-7-deazaguanine (CDG) to 7-cyano-7-deazaguanine (preQ(0)). The polypeptide is 7-cyano-7-deazaguanine synthase (Methanobrevibacter smithii (strain ATCC 35061 / DSM 861 / OCM 144 / PS)).